The following is a 220-amino-acid chain: Ribonuclease HII (220 aa).

The 189-residue stretch at 32–220 folds into the RNase H type-2 domain; the sequence is KHIAGIDEAG…FAPIKGCFDC (189 aa). Residues aspartate 38, glutamate 39, and aspartate 130 each contribute to the a divalent metal cation site.

It belongs to the RNase HII family. The cofactor is Mn(2+). It depends on Mg(2+) as a cofactor.

Its subcellular location is the cytoplasm. It catalyses the reaction Endonucleolytic cleavage to 5'-phosphomonoester.. In terms of biological role, endonuclease that specifically degrades the RNA of RNA-DNA hybrids. The protein is Ribonuclease HII of Brucella abortus (strain 2308).